The following is a 471-amino-acid chain: 6-phosphofructo-2-kinase/fructose-2,6-bisphosphatase 1 (471 aa).

At S2 the chain carries N-acetylserine. A 6-phosphofructo-2-kinase region spans residues 2–250 (SQEMGELTQT…VYYLMNIHVT (249 aa)). Position 33 is a phosphoserine; by PKA (S33). Residue 49-57 (GLPARGKTY) participates in ATP binding. Beta-D-fructose 6-phosphate-binding residues include R82 and R105. Residue D131 is part of the active site. Residues T133 and R139 each coordinate beta-D-fructose 6-phosphate. S141 carries the phosphoserine modification. C161 is a catalytic residue. 170–175 (NIRQVK) contacts ATP. Beta-D-fructose 6-phosphate contacts are provided by K175, R196, and Y200. Residues 251 to 471 (PRSIYLCRHG…EALDTVPAHY (221 aa)) are fructose-2,6-bisphosphatase. R258 provides a ligand contact to beta-D-fructose 2,6-bisphosphate. H259 functions as the Tele-phosphohistidine intermediate in the catalytic mechanism. N265, G271, and R308 together coordinate beta-D-fructose 2,6-bisphosphate. The active-site Proton donor/acceptor is the E328. Y339, R353, K357, Y368, Q394, and R398 together coordinate beta-D-fructose 2,6-bisphosphate. 350-353 (FALR) is a binding site for ATP. ATP-binding positions include 394 to 398 (QAVMR) and Y430.

This sequence in the C-terminal section; belongs to the phosphoglycerate mutase family. As to quaternary structure, homodimer. As to expression, liver.

The catalysed reaction is beta-D-fructose 2,6-bisphosphate + H2O = beta-D-fructose 6-phosphate + phosphate. It catalyses the reaction beta-D-fructose 6-phosphate + ATP = beta-D-fructose 2,6-bisphosphate + ADP + H(+). Phosphorylation at Ser-33 inhibits the kinase and activates the bisphosphatase. Its function is as follows. Synthesis and degradation of fructose 2,6-bisphosphate. In Bos taurus (Bovine), this protein is 6-phosphofructo-2-kinase/fructose-2,6-bisphosphatase 1.